The chain runs to 259 residues: BTB/POZ domain-containing protein KCTD4 (259 aa).

The interval methionine 1–glutamate 22 is disordered. The 102-residue stretch at threonine 33–glutamine 134 folds into the BTB domain.

This chain is BTB/POZ domain-containing protein KCTD4 (KCTD4), found in Bos taurus (Bovine).